A 748-amino-acid chain; its full sequence is Spidroin-1 (748 aa).

25 consecutive repeat copies span residues 1–25, 26–38, 39–66, 67–96, 97–130, 131–158, 159–191, 192–204, 205–235, 236–262, 263–292, 293–305, 306–333, 334–360, 361–394, 395–424, 425–458, 459–485, 486–512, 513–525, 526–555, 556–582, 583–612, 613–642, and 643–655. The 25 X approximate tandem repeats stretch occupies residues 1-655; that stretch reads QGAGAAAAAA…ASAAASRLSS (655 aa).

Belongs to the silk fibroin family. Major subunit, with spidroin 2, of the dragline silk.

The protein localises to the secreted. It localises to the extracellular space. In terms of biological role, spiders' major ampullate silk possesses unique characteristics of strength and elasticity. Fibroin consists of pseudocrystalline regions of antiparallel beta-sheet interspersed with elastic amorphous segments. The chain is Spidroin-1 from Trichonephila clavipes (Golden silk orbweaver).